The chain runs to 374 residues: Methylthioribose-1-phosphate isomerase (374 aa).

Serine 2 is subject to N-acetylserine. Aspartate 253 serves as the catalytic Proton donor.

Belongs to the eIF-2B alpha/beta/delta subunits family. MtnA subfamily.

It is found in the cytoplasm. It localises to the nucleus. It catalyses the reaction 5-(methylsulfanyl)-alpha-D-ribose 1-phosphate = 5-(methylsulfanyl)-D-ribulose 1-phosphate. It participates in amino-acid biosynthesis; L-methionine biosynthesis via salvage pathway; L-methionine from S-methyl-5-thio-alpha-D-ribose 1-phosphate: step 1/6. In terms of biological role, catalyzes the interconversion of methylthioribose-1-phosphate (MTR-1-P) into methylthioribulose-1-phosphate (MTRu-1-P). This Arabidopsis thaliana (Mouse-ear cress) protein is Methylthioribose-1-phosphate isomerase.